The primary structure comprises 434 residues: N-acylneuraminate cytidylyltransferase (434 aa).

N-acetylmethionine is present on M1. Residues 1–42 (MDSVEKGAATSVSNPRGRPSRGRPPKLQRNSRGGQGRGVEKP) form a disordered region. A BC1 motif motif is present at residues 15–31 (PRGRPSRGRPPKLQRNS). R37 and R52 each carry omega-N-methylarginine. The substrate site is built by R52, N62, R111, S120, S122, and Q143. The BC2 motif motif lies at 200-206 (KRPRRQD). Residue R201 is part of the active site. The BC3 motif signature appears at 269 to 276 (KEKLKEIK).

This sequence belongs to the CMP-NeuNAc synthase family. Homotetramer; the active enzyme is formed by a dimer of dimers.

It is found in the nucleus. It carries out the reaction an N-acylneuraminate + CTP = a CMP-N-acyl-beta-neuraminate + diphosphate. The protein operates within amino-sugar metabolism; N-acetylneuraminate metabolism. Functionally, catalyzes the activation of N-acetylneuraminic acid (NeuNAc) to cytidine 5'-monophosphate N-acetylneuraminic acid (CMP-NeuNAc), a substrate required for the addition of sialic acid. Has some activity toward NeuNAc, N-glycolylneuraminic acid (Neu5Gc) or 2-keto-3-deoxy-D-glycero-D-galacto-nononic acid (KDN). In Bos taurus (Bovine), this protein is N-acylneuraminate cytidylyltransferase (CMAS).